Here is a 346-residue protein sequence, read N- to C-terminus: Putative F-box/kelch-repeat protein At1g27420 (346 aa).

In terms of domain architecture, F-box spans 9–56 (PIIPGLTDDVAELCVSKIPRSSFQITSQVCRRWRSFLRSQHFAAVRKL). Kelch repeat units lie at residues 62–109 (EFLC…VLDG), 111–167 (KIVF…EVNG), 168–215 (LLYV…AFSS), 217–257 (LYAV…VRNK), and 259–300 (YFMD…VWNN).

The chain is Putative F-box/kelch-repeat protein At1g27420 from Arabidopsis thaliana (Mouse-ear cress).